The primary structure comprises 281 residues: Large ribosomal subunit protein uL2 (281 aa).

Residues 208–281 (AGRSRYAGQR…RGRKRGPHTR (74 aa)) are disordered. A compositionally biased stretch (basic residues) spans 254–281 (TVGKKTRSHKARSNKFIVRGRKRGPHTR).

The protein belongs to the universal ribosomal protein uL2 family. As to quaternary structure, part of the 50S ribosomal subunit. Forms a bridge to the 30S subunit in the 70S ribosome.

Functionally, one of the primary rRNA binding proteins. Required for association of the 30S and 50S subunits to form the 70S ribosome, for tRNA binding and peptide bond formation. It has been suggested to have peptidyltransferase activity; this is somewhat controversial. Makes several contacts with the 16S rRNA in the 70S ribosome. This is Large ribosomal subunit protein uL2 from Limosilactobacillus fermentum (strain NBRC 3956 / LMG 18251) (Lactobacillus fermentum).